We begin with the raw amino-acid sequence, 850 residues long: Penicillin-binding protein 1A (850 aa).

The Cytoplasmic portion of the chain corresponds to methionine 1–lysine 5. The chain crosses the membrane as a helical; Signal-anchor for type II membrane protein span at residues tyrosine 6–tyrosine 26. Over arginine 27 to phenylalanine 850 the chain is Periplasmic. Residues methionine 48–aspartate 216 form a transglycosylase region. Residue glutamate 86 is the Proton donor; for transglycosylase activity of the active site. Positions aspartate 400–arginine 710 are transpeptidase. Serine 465 (acyl-ester intermediate; for transpeptidase activity) is an active-site residue.

This sequence in the N-terminal section; belongs to the glycosyltransferase 51 family. In the C-terminal section; belongs to the transpeptidase family.

The protein resides in the cell inner membrane. It catalyses the reaction [GlcNAc-(1-&gt;4)-Mur2Ac(oyl-L-Ala-gamma-D-Glu-L-Lys-D-Ala-D-Ala)](n)-di-trans,octa-cis-undecaprenyl diphosphate + beta-D-GlcNAc-(1-&gt;4)-Mur2Ac(oyl-L-Ala-gamma-D-Glu-L-Lys-D-Ala-D-Ala)-di-trans,octa-cis-undecaprenyl diphosphate = [GlcNAc-(1-&gt;4)-Mur2Ac(oyl-L-Ala-gamma-D-Glu-L-Lys-D-Ala-D-Ala)](n+1)-di-trans,octa-cis-undecaprenyl diphosphate + di-trans,octa-cis-undecaprenyl diphosphate + H(+). The enzyme catalyses Preferential cleavage: (Ac)2-L-Lys-D-Ala-|-D-Ala. Also transpeptidation of peptidyl-alanyl moieties that are N-acyl substituents of D-alanine.. It participates in cell wall biogenesis; peptidoglycan biosynthesis. In terms of biological role, cell wall formation. Synthesis of cross-linked peptidoglycan from the lipid intermediates. The enzyme has a penicillin-insensitive transglycosylase N-terminal domain (formation of linear glycan strands) and a penicillin-sensitive transpeptidase C-terminal domain (cross-linking of the peptide subunits). The protein is Penicillin-binding protein 1A (mrcA) of Escherichia coli (strain K12).